The following is a 687-amino-acid chain: Hemin receptor (687 aa).

The N-terminal stretch at 1–28 (MPRSTSDRFRWSPLSLAIACTLSLAVQA) is a signal peptide. The TonB box signature appears at 44 to 51 (DTMVVTAT). The TBDR plug domain occupies 56–167 (SSFEAPMMVT…LGGVISYETV (112 aa)). The TBDR beta-barrel domain maps to 178 to 687 (NSGYRVYSAA…NAKFFVSYQW (510 aa)). The interval 319–338 (ARPQGTPEEGRKQTTKGGKL) is disordered. Over residues 326-338 (EEGRKQTTKGGKL) the composition is skewed to basic and acidic residues. The TonB C-terminal box signature appears at 670–687 (QGVPQDGRNAKFFVSYQW).

The protein belongs to the TonB-dependent receptor family.

The protein resides in the cell outer membrane. In terms of biological role, this protein is involved in the initial step of iron uptake by binding hemin, an iron chelatin siderophore that allows the bacteria to extract iron from the environment. The chain is Hemin receptor (hemR) from Yersinia enterocolitica.